The chain runs to 371 residues: Peptidyl-prolyl cis-trans isomerase D (371 aa).

Positions 11–172 constitute a PPIase cyclophilin-type domain; that stretch reads FFDIQIGNEK…KDVTIVECGE (162 aa). The interval 175-195 is disordered; sequence GQDYDDADKQTPDATGDPYED. TPR repeat units lie at residues 214 to 247, 267 to 300, and 308 to 341; these read ASEL…LHEF, FALH…ANAA, and AKAY…APGD.

The protein belongs to the cyclophilin-type PPIase family. PPIase D subfamily.

It is found in the cytoplasm. The enzyme catalyses [protein]-peptidylproline (omega=180) = [protein]-peptidylproline (omega=0). In terms of biological role, PPIases accelerate the folding of proteins. It catalyzes the cis-trans isomerization of proline imidic peptide bonds in oligopeptides. The sequence is that of Peptidyl-prolyl cis-trans isomerase D (cpr6) from Aspergillus oryzae (strain ATCC 42149 / RIB 40) (Yellow koji mold).